A 549-amino-acid polypeptide reads, in one-letter code: Glucose-6-phosphate isomerase (549 aa).

Residue Glu-355 is the Proton donor of the active site. Catalysis depends on residues His-386 and Lys-514.

The protein belongs to the GPI family.

The protein localises to the cytoplasm. The enzyme catalyses alpha-D-glucose 6-phosphate = beta-D-fructose 6-phosphate. It functions in the pathway carbohydrate biosynthesis; gluconeogenesis. Its pathway is carbohydrate degradation; glycolysis; D-glyceraldehyde 3-phosphate and glycerone phosphate from D-glucose: step 2/4. Catalyzes the reversible isomerization of glucose-6-phosphate to fructose-6-phosphate. This chain is Glucose-6-phosphate isomerase, found in Cronobacter sakazakii (strain ATCC BAA-894) (Enterobacter sakazakii).